A 170-amino-acid chain; its full sequence is Lipoprotein signal peptidase (170 aa).

Transmembrane regions (helical) follow at residues 9–29, 72–92, and 94–114; these read FNIF…KYLV, IFFL…SLKE, and NCIA…NVID. Catalysis depends on residues Asp124 and Asp146. Residues 143–163 form a helical membrane-spanning segment; it reads NFADSYVVIGMILFLVYDFFI.

The protein belongs to the peptidase A8 family.

The protein resides in the cell inner membrane. It carries out the reaction Release of signal peptides from bacterial membrane prolipoproteins. Hydrolyzes -Xaa-Yaa-Zaa-|-(S,diacylglyceryl)Cys-, in which Xaa is hydrophobic (preferably Leu), and Yaa (Ala or Ser) and Zaa (Gly or Ala) have small, neutral side chains.. It functions in the pathway protein modification; lipoprotein biosynthesis (signal peptide cleavage). Its function is as follows. This protein specifically catalyzes the removal of signal peptides from prolipoproteins. The sequence is that of Lipoprotein signal peptidase from Borreliella burgdorferi (strain ATCC 35210 / DSM 4680 / CIP 102532 / B31) (Borrelia burgdorferi).